Here is a 170-residue protein sequence, read N- to C-terminus: Putative phosphoesterase OB1230 (170 aa).

His34 functions as the Proton donor in the catalytic mechanism. 2 short sequence motifs (HXTX) span residues His34–Leu37 and His115–Ile118. His115 serves as the catalytic Proton acceptor.

The protein belongs to the 2H phosphoesterase superfamily. YjcG family.

The chain is Putative phosphoesterase OB1230 from Oceanobacillus iheyensis (strain DSM 14371 / CIP 107618 / JCM 11309 / KCTC 3954 / HTE831).